The primary structure comprises 620 residues: Leucine-rich repeat and immunoglobulin-like domain-containing nogo receptor-interacting protein 1 (620 aa).

The N-terminal stretch at 1–41 (MQVSKRMLAGGVRSMPSPLLACWQPILLLVLGSVLSGSATG) is a signal peptide. Cystine bridges form between cysteine 42–cysteine 48 and cysteine 46–cysteine 57. The LRRNT domain occupies 42–71 (CPPRCECSAQDRAVLCHRKRFVAVPEGIPT). The Extracellular segment spans residues 42-561 (CPPRCECSAQ…FDIKTLIIAT (520 aa)). LRR repeat units follow at residues 72–93 (ETRL…EFAS), 96–117 (HLEE…AFNN), 120–141 (NLRT…VFTG), 144–165 (NLTK…MFQD), 168–189 (NLKS…AFSG), 192–213 (SLEQ…ALSH), 216–237 (GLIV…SFKR), 264–285 (NLTS…AVRH), 288–309 (YLRF…MLHE), 312–333 (RLQE…AFRG), and 336–357 (YLRV…VFHS). A glycan (N-linked (GlcNAc...) asparagine) is linked at asparagine 144. Asparagine 202 carries an N-linked (GlcNAc...) asparagine glycan. Asparagine 264, asparagine 274, and asparagine 293 each carry an N-linked (GlcNAc...) asparagine glycan. The N-linked (GlcNAc...) asparagine glycan is linked to asparagine 341. The LRRCT domain maps to 369–423 (NPLACDCRLLWVFRRRWRLNFNRQQPTCATPEFVQGKEFKDFPDVLLPNYFTCRR). Disulfide bonds link cysteine 373-cysteine 396, cysteine 375-cysteine 421, and cysteine 446-cysteine 497. In terms of domain architecture, Ig-like C2-type spans 411–513 (PDVLLPNYFT…GNDSMPAHLH (103 aa)). N-linked (GlcNAc...) asparagine glycosylation is found at asparagine 492, asparagine 505, asparagine 526, and asparagine 542. The helical transmembrane segment at 562–582 (TMGFISFLGVVLFCLVLLFLW) threads the bilayer. The Cytoplasmic segment spans residues 583-620 (SRGKGNTKHNIEIEYVPRKSDAGISSADAPRKFNMKMI). Serine 602 is subject to Phosphoserine.

Homotetramer. Forms a ternary complex with RTN4R/NGFR and RTN4R/TNFRSF19. Interacts with NGRF and MYT1L. Interacts with RTN4R. Post-translationally, N-glycosylated. Contains predominantly high-mannose glycans. Expressed exclusively in the central nervous system. Highest level in the in amygdala, hippocampus, thalamus and cerebral cortex. In the rest of the brain a basal expression seems to be always present. Up-regulated in substantia nigra neurons from Parkinson disease patients.

Its subcellular location is the cell membrane. In terms of biological role, functional component of the Nogo receptor signaling complex (RTN4R/NGFR) in RhoA activation responsible for some inhibition of axonal regeneration by myelin-associated factors. Is also an important negative regulator of oligodentrocyte differentiation and axonal myelination. Acts in conjunction with RTN4 and RTN4R in regulating neuronal precursor cell motility during cortical development. This is Leucine-rich repeat and immunoglobulin-like domain-containing nogo receptor-interacting protein 1 (LINGO1) from Homo sapiens (Human).